Here is a 457-residue protein sequence, read N- to C-terminus: UDP-N-acetylmuramate--L-alanine ligase (457 aa).

Residue 118–124 (GTHGKTT) participates in ATP binding.

The protein belongs to the MurCDEF family.

The protein localises to the cytoplasm. It carries out the reaction UDP-N-acetyl-alpha-D-muramate + L-alanine + ATP = UDP-N-acetyl-alpha-D-muramoyl-L-alanine + ADP + phosphate + H(+). It functions in the pathway cell wall biogenesis; peptidoglycan biosynthesis. Cell wall formation. The sequence is that of UDP-N-acetylmuramate--L-alanine ligase from Clostridium perfringens (strain 13 / Type A).